We begin with the raw amino-acid sequence, 468 residues long: ATP synthase subunit beta 2 (468 aa).

145–152 is a binding site for ATP; it reads GGAGVGKT.

It belongs to the ATPase alpha/beta chains family. F-type ATPases have 2 components, CF(1) - the catalytic core - and CF(0) - the membrane proton channel. CF(1) has five subunits: alpha(3), beta(3), gamma(1), delta(1), epsilon(1). CF(0) has three main subunits: a(1), b(2) and c(9-12). The alpha and beta chains form an alternating ring which encloses part of the gamma chain. CF(1) is attached to CF(0) by a central stalk formed by the gamma and epsilon chains, while a peripheral stalk is formed by the delta and b chains.

It is found in the cell membrane. It catalyses the reaction ATP + H2O + 4 H(+)(in) = ADP + phosphate + 5 H(+)(out). Functionally, produces ATP from ADP in the presence of a proton gradient across the membrane. The catalytic sites are hosted primarily by the beta subunits. The chain is ATP synthase subunit beta 2 from Mycoplasmopsis pulmonis (strain UAB CTIP) (Mycoplasma pulmonis).